Reading from the N-terminus, the 699-residue chain is Elongation factor G (699 aa).

In terms of domain architecture, tr-type G spans 8 to 286; sequence EKLRNIGIVA…AVIVTYPLPI (279 aa). Residues 17-24, 84-88, and 138-141 contribute to the GTP site; these read AHIDAGKT, DTPGH, and NKMD.

The protein belongs to the TRAFAC class translation factor GTPase superfamily. Classic translation factor GTPase family. EF-G/EF-2 subfamily.

It localises to the cytoplasm. Functionally, catalyzes the GTP-dependent ribosomal translocation step during translation elongation. During this step, the ribosome changes from the pre-translocational (PRE) to the post-translocational (POST) state as the newly formed A-site-bound peptidyl-tRNA and P-site-bound deacylated tRNA move to the P and E sites, respectively. Catalyzes the coordinated movement of the two tRNA molecules, the mRNA and conformational changes in the ribosome. This is Elongation factor G (fusA) from Aquifex pyrophilus.